Reading from the N-terminus, the 376-residue chain is Cysteine synthase 1 (376 aa).

The N-terminal 16 residues, 1 to 16 (MFRHGVRTFATTSLRR), are a transit peptide targeting the mitochondrion. At lysine 79 the chain carries N6-(pyridoxal phosphate)lysine. Pyridoxal 5'-phosphate contacts are provided by residues asparagine 109, 215-219 (GTGGT), and serine 314.

The protein belongs to the cysteine synthase/cystathionine beta-synthase family. It depends on pyridoxal 5'-phosphate as a cofactor.

It is found in the mitochondrion. It catalyses the reaction O-succinyl-L-serine + hydrogen sulfide = L-cysteine + succinate. The catalysed reaction is O-acetyl-L-serine + hydrogen sulfide = L-cysteine + acetate. The protein operates within amino-acid biosynthesis; L-cysteine biosynthesis; L-cysteine from L-serine: step 2/2. Functionally, catalyzes the conversion of O-succinyl-L-serine into cysteine, the last step in the cysteine biosynthesis pathway. Can also use O-acetyl-L-serine. The sequence is that of Cysteine synthase 1 (cys-17) from Neurospora crassa (strain ATCC 24698 / 74-OR23-1A / CBS 708.71 / DSM 1257 / FGSC 987).